Reading from the N-terminus, the 612-residue chain is Cytoplasmic dynein 1 intermediate chain 2 (612 aa).

Basic and acidic residues-rich tracts occupy residues Met1 to Arg13 and Gln20 to Ala43. 2 disordered regions span residues Met1–Ile117 and Thr129–Gln188. Residue Ser2 is modified to N-acetylserine. Ser51 carries the diphosphoserine modification. Phosphoserine is present on residues Ser51 and Ser84. Over residues Pro82–Ser91 the composition is skewed to low complexity. Phosphothreonine is present on Thr89. A phosphoserine mark is found at Ser91, Ser95, and Ser98. Residues Glu164 to Gln188 are compositionally biased toward basic and acidic residues. 7 WD repeats span residues Ser251–Glu300, His304–Val344, Ala353–Asp394, Ser403–Ser443, Gly448–Ser493, Asp496–Thr536, and Glu542–Arg581.

It belongs to the dynein intermediate chain family. Homodimer. The cytoplasmic dynein 1 complex consists of two catalytic heavy chains (HCs) and a number of non-catalytic subunits presented by intermediate chains (ICs), light intermediate chains (LICs) and light chains (LCs); the composition seems to vary in respect to the IC, LIC and LC composition. The heavy chain homodimer serves as a scaffold for the probable homodimeric assembly of the respective non-catalytic subunits. The ICs and LICs bind directly to the HC dimer and the LCs assemble on the IC dimer. Interacts with DYNLT3. Interacts with DYNLT1. Interacts (dephosphorylated at Ser-84) with DCTN1. Interacts with BICD2. Interacts with SPEF2. Interacts with CFAP61. Post-translationally, the phosphorylation status of Ser-84 appears to be involved in dynactin-dependent target binding. In terms of processing, pyrophosphorylation by 5-diphosphoinositol pentakisphosphate (5-IP7) promotes interaction with DCTN1. Serine pyrophosphorylation is achieved by Mg(2+)-dependent, but enzyme independent transfer of a beta-phosphate from a inositol pyrophosphate to a pre-phosphorylated serine residue.

It localises to the cytoplasm. The protein localises to the cytoskeleton. Acts as one of several non-catalytic accessory components of the cytoplasmic dynein 1 complex that are thought to be involved in linking dynein to cargos and to adapter proteins that regulate dynein function. Cytoplasmic dynein 1 acts as a motor for the intracellular retrograde motility of vesicles and organelles along microtubules. The intermediate chains mediate the binding of dynein to dynactin via its 150 kDa component (p150-glued) DCTN1. Involved in membrane-transport, such as Golgi apparatus, late endosomes and lysosomes. This Bos taurus (Bovine) protein is Cytoplasmic dynein 1 intermediate chain 2 (DYNC1I2).